We begin with the raw amino-acid sequence, 440 residues long: Amino-acid acetyltransferase (440 aa).

Residues 289-429 enclose the N-acetyltransferase domain; it reads ETIRLATVSD…QHYNYQRRSK (141 aa).

The protein belongs to the acetyltransferase family. ArgA subfamily.

Its subcellular location is the cytoplasm. It catalyses the reaction L-glutamate + acetyl-CoA = N-acetyl-L-glutamate + CoA + H(+). It functions in the pathway amino-acid biosynthesis; L-arginine biosynthesis; N(2)-acetyl-L-ornithine from L-glutamate: step 1/4. In Pasteurella multocida (strain Pm70), this protein is Amino-acid acetyltransferase (argA).